The sequence spans 324 residues: uncharacterized protein (324 aa).

This is an uncharacterized protein from Saccharomyces cerevisiae (strain ATCC 204508 / S288c) (Baker's yeast).